A 69-amino-acid polypeptide reads, in one-letter code: MPKQIHEIKDFLLTARRKDARTVKIKKNKDMVKFKVRCSKYLYTLCVSDFEKADKLKQSLPPGLSVQDL.

Belongs to the eukaryotic ribosomal protein eL38 family.

The chain is Large ribosomal subunit protein eL38 (RPL38) from Solanum lycopersicum (Tomato).